Consider the following 203-residue polypeptide: Glycerol-3-phosphate acyltransferase 1 (203 aa).

The next 6 helical transmembrane spans lie at leucine 2–isoleucine 22, glycine 52–tryptophan 72, valine 82–phenylalanine 102, valine 117–leucine 137, glutamate 150–tryptophan 168, and valine 170–tyrosine 190.

This sequence belongs to the PlsY family. As to quaternary structure, probably interacts with PlsX.

It is found in the cell inner membrane. The catalysed reaction is an acyl phosphate + sn-glycerol 3-phosphate = a 1-acyl-sn-glycero-3-phosphate + phosphate. Its pathway is lipid metabolism; phospholipid metabolism. In terms of biological role, catalyzes the transfer of an acyl group from acyl-phosphate (acyl-PO(4)) to glycerol-3-phosphate (G3P) to form lysophosphatidic acid (LPA). This enzyme utilizes acyl-phosphate as fatty acyl donor, but not acyl-CoA or acyl-ACP. In Thermotoga maritima (strain ATCC 43589 / DSM 3109 / JCM 10099 / NBRC 100826 / MSB8), this protein is Glycerol-3-phosphate acyltransferase 1.